We begin with the raw amino-acid sequence, 247 residues long: Probable transcriptional regulatory protein MS0710 (247 aa).

This sequence belongs to the TACO1 family.

The protein resides in the cytoplasm. The chain is Probable transcriptional regulatory protein MS0710 from Mannheimia succiniciproducens (strain KCTC 0769BP / MBEL55E).